Reading from the N-terminus, the 400-residue chain is Protection of telomeres homolog 1 (400 aa).

The protein belongs to the telombin family. Expressed in sperm and oocytes.

The protein resides in the nucleus. Its subcellular location is the nucleus envelope. The protein localises to the chromosome. It localises to the telomere. Telomeric DNA-binding protein, which binds to single-stranded C-rich repeat sequences, with high specificity to the 5'-GCCTAA-3' sequence. Repeat sequence binding can be at the 5' or 3' telomeric end. May have a role in protecting the 5' end of the C-rich strand of the telomere. Acts redundantly with pot-2 to negatively regulate telomerase-mediated telomere extension. Also regulates telomere length by the telomerase-independent telomere maintenance pathway called ALT (alternative lengthening of telomeres). Through sun-1, anchors telomeres to the nuclear envelope in embryos. The sequence is that of Protection of telomeres homolog 1 from Caenorhabditis elegans.